Consider the following 424-residue polypeptide: Serine--tRNA ligase (424 aa).

232–234 (TAE) contacts L-serine. 263–265 (RRE) serves as a coordination point for ATP. Glutamate 286 is a binding site for L-serine. Position 350-353 (350-353 (EISS)) interacts with ATP. Serine 384 provides a ligand contact to L-serine.

Belongs to the class-II aminoacyl-tRNA synthetase family. Type-1 seryl-tRNA synthetase subfamily. As to quaternary structure, homodimer. The tRNA molecule binds across the dimer.

The protein localises to the cytoplasm. It carries out the reaction tRNA(Ser) + L-serine + ATP = L-seryl-tRNA(Ser) + AMP + diphosphate + H(+). The enzyme catalyses tRNA(Sec) + L-serine + ATP = L-seryl-tRNA(Sec) + AMP + diphosphate + H(+). The protein operates within aminoacyl-tRNA biosynthesis; selenocysteinyl-tRNA(Sec) biosynthesis; L-seryl-tRNA(Sec) from L-serine and tRNA(Sec): step 1/1. In terms of biological role, catalyzes the attachment of serine to tRNA(Ser). Is also able to aminoacylate tRNA(Sec) with serine, to form the misacylated tRNA L-seryl-tRNA(Sec), which will be further converted into selenocysteinyl-tRNA(Sec). In Prochlorococcus marinus subsp. pastoris (strain CCMP1986 / NIES-2087 / MED4), this protein is Serine--tRNA ligase.